Here is a 338-residue protein sequence, read N- to C-terminus: L-asparaginase 1 (338 aa).

Residues 4-329 (KSIYVAYTGG…ETIRKAMSQN (326 aa)) enclose the Asparaginase/glutaminase domain. Catalysis depends on Thr-14, which acts as the O-isoaspartyl threonine intermediate. Substrate-binding positions include 59-61 (DSS) and 91-92 (TD).

This sequence belongs to the asparaginase 1 family. As to quaternary structure, homotetramer.

The protein resides in the cytoplasm. The catalysed reaction is L-asparagine + H2O = L-aspartate + NH4(+). This chain is L-asparaginase 1 (ansA), found in Escherichia coli O157:H7.